A 263-amino-acid chain; its full sequence is 4-hydroxy-2-oxo-heptane-1,7-dioate aldolase (263 aa).

His45 serves as the catalytic Proton acceptor. Gln147 serves as a coordination point for substrate. A divalent metal cation is bound at residue Glu149. Positions 174 and 175 each coordinate substrate. Residue Asp175 coordinates a divalent metal cation.

It belongs to the HpcH/HpaI aldolase family. Homohexamer; trimer of dimers. A divalent metal cation serves as cofactor.

The catalysed reaction is 4-hydroxy-2-oxoheptanedioate = succinate semialdehyde + pyruvate. It functions in the pathway aromatic compound metabolism; 4-hydroxyphenylacetate degradation; pyruvate and succinate semialdehyde from 4-hydroxyphenylacetate: step 7/7. Its function is as follows. Catalyzes the reversible retro-aldol cleavage of 4-hydroxy-2-ketoheptane-1,7-dioate (HKHD) to pyruvate and succinic semialdehyde. This Salmonella newport (strain SL254) protein is 4-hydroxy-2-oxo-heptane-1,7-dioate aldolase.